The primary structure comprises 314 residues: Atrochrysone carboxyl ACP thioesterase AgnL7 (314 aa).

Residues His103, His105, Asp107, and His108 each coordinate Zn(2+). Residue Asp107 is the Proton donor/acceptor of the active site.

It belongs to the metallo-beta-lactamase superfamily. Zn(2+) is required as a cofactor.

The catalysed reaction is atrochrysone carboxyl-[ACP] + H2O = atrochrysone carboxylate + holo-[ACP] + H(+). Its pathway is secondary metabolite biosynthesis. Its function is as follows. Atrochrysone carboxyl ACP thioesterase; part of the gene cluster that mediates the biosynthesis of agnestins, dihydroxy-xanthone metabolites. The pathway begins with the assembly and cyclization of atrochrysone thioester by the non-reducing polyketide synthase Agnpks1. The atrochrysone carboxyl ACP thioesterase AgnL7 then breaks the thioester bond and releases the atrochrysone carboxylic acid as the first enzyme-free intermediate. The decarboxylase AgnL1 then catalyzes the concerted decarboxylation-elimination required to convert atochrysone carboxylic acid into emodin anthrone, which is further oxidized to emodin by the anthrone oxygenase AgnL2. Emodin then undergoes reduction catalyzed by the oxidoreductase AgnL4 to yield the dihydroquinone tautomer which is the substrate for reduction by the short chain dehydrogenase AgnL6 reduction to produce hydroxyketone, followed by AgnL8 dehydration and likely spontaneous autoxidation to chrysophanol. Baeyer-Villiger oxidation by the oxidase AgnL3 leads to monodictyphenone via cleavage of the C-10/C-10a bond of chrysophanol. Alternative cleavage at the C-4a/C-10 bond of chrysophanol also leads to the formation some cephalone F. Further conversion to agnestins A and B, requires reduction to dihydro-monodictyphenone, oxidation to agnestin C probably via an epoxide, and rearrangement to either agnestin A or agnestin B directly, although agnestin A or agnestin B can also interconvert. Within the cluster, AgnR1 is the only unassigned oxidoreductase present which could be involved in this conversion. However, AgnR1 seems not to be involved in this step, and thus genes involved in the proposed oxidation/reduction may be located elsewhere on the genome. Further agnestin A derivatives are probably formed by spontaneous decarboxylations, dehydrations and methanolysis reactions. The sequence is that of Atrochrysone carboxyl ACP thioesterase AgnL7 from Paecilomyces divaricatus (Penicillium divaricatum).